Consider the following 153-residue polypeptide: D-erythrulose-4-phosphate isomerase 1 (153 aa).

C69 acts as the Proton acceptor in catalysis.

This sequence belongs to the LacAB/RpiB family.

The enzyme catalyses D-erythrulose 4-phosphate = D-erythrose 4-phosphate. Its pathway is carbohydrate metabolism; erythritol degradation. The protein operates within carbohydrate metabolism; D-threitol degradation. Functionally, catalyzes the isomerization of D-erythrulose-4P to D-erythrose-4P. Involved in the degradation pathways of erythritol and D-threitol, that allow M.smegmatis to grow on these compounds as the sole carbon source. The protein is D-erythrulose-4-phosphate isomerase 1 of Mycolicibacterium smegmatis (strain ATCC 700084 / mc(2)155) (Mycobacterium smegmatis).